A 31-amino-acid chain; its full sequence is Protamine PTP4 (31 aa).

Residues 1 to 31 (MPRRRRASRRIRRRRRPRVSRRRRGGRRRRR) form a disordered region.

Testis.

The protein resides in the nucleus. It is found in the chromosome. Functionally, protamines substitute for histones in the chromatin of sperm during the haploid phase of spermatogenesis. They compact sperm DNA into a highly condensed, stable and inactive complex. The polypeptide is Protamine PTP4 (Oncorhynchus mykiss (Rainbow trout)).